The chain runs to 201 residues: FMN-dependent NADH:quinone oxidoreductase (201 aa).

Position 92-95 (Met92–Leu95) interacts with FMN.

The protein belongs to the azoreductase type 1 family. Homodimer. FMN is required as a cofactor.

It catalyses the reaction 2 a quinone + NADH + H(+) = 2 a 1,4-benzosemiquinone + NAD(+). The catalysed reaction is N,N-dimethyl-1,4-phenylenediamine + anthranilate + 2 NAD(+) = 2-(4-dimethylaminophenyl)diazenylbenzoate + 2 NADH + 2 H(+). In terms of biological role, quinone reductase that provides resistance to thiol-specific stress caused by electrophilic quinones. Functionally, also exhibits azoreductase activity. Catalyzes the reductive cleavage of the azo bond in aromatic azo compounds to the corresponding amines. The protein is FMN-dependent NADH:quinone oxidoreductase of Caldicellulosiruptor bescii (strain ATCC BAA-1888 / DSM 6725 / KCTC 15123 / Z-1320) (Anaerocellum thermophilum).